We begin with the raw amino-acid sequence, 264 residues long: MIEELINKSKKIVIKIGSNTLSNDNGTINKNFLKELSEQIIYLRDKGKQFVIVSSGARIAGVSTLGKWMRKEDMNYKQALCAIGQVELMDAYRRCFEPYNVFIAQMLLTRDDFSDAHRRLNIRNTLFTLVDEGVIPIINENDTVSVEEIRIGDNDTLAALTTNIWNADLLILFSDIDGIYDKNPKEHEDAILVENVMNIDELLEKIEVGDVNEFGTGGIATKIEAAKAVNDYGIPMILANGKKENILLKLLEGTEKATIFQAGK.

Lys15 lines the ATP pocket. The substrate site is built by Ser55, Asp142, and Asn154. Residues 174–175 (SD) and 216–222 (TGGIATK) each bind ATP.

Belongs to the glutamate 5-kinase family.

Its subcellular location is the cytoplasm. It catalyses the reaction L-glutamate + ATP = L-glutamyl 5-phosphate + ADP. The protein operates within amino-acid biosynthesis; L-proline biosynthesis; L-glutamate 5-semialdehyde from L-glutamate: step 1/2. In terms of biological role, catalyzes the transfer of a phosphate group to glutamate to form L-glutamate 5-phosphate. The protein is Glutamate 5-kinase of Alkaliphilus metalliredigens (strain QYMF).